The primary structure comprises 353 residues: Heterogeneous nuclear ribonucleoproteins A2/B1 (353 aa).

M1 bears the N-acetylmethionine mark. A Phosphothreonine modification is found at T4. The short motif at 9 to 15 is the Nuclear localization signal element; sequence PLERKKR. RRM domains lie at 21–104 and 112–191; these read RKLF…ESGK and KKLF…LSRQ. K22 participates in a covalent cross-link: Glycyl lysine isopeptide (Lys-Gly) (interchain with G-Cter in SUMO2). Position 29 is a phosphoserine (S29). R38 is modified (omega-N-methylarginine). S85 carries the phosphoserine modification. K104 is subject to N6,N6-dimethyllysine; alternate. K104 participates in a covalent cross-link: Glycyl lysine isopeptide (Lys-Gly) (interchain with G-Cter in SUMO2); alternate. Residues K112, K120, and K137 each participate in a glycyl lysine isopeptide (Lys-Gly) (interchain with G-Cter in SUMO2) cross-link. T140 is subject to Phosphothreonine. S149 is modified (phosphoserine). K152 participates in a covalent cross-link: Glycyl lysine isopeptide (Lys-Gly) (interchain with G-Cter in SUMO2). Residue T159 is modified to Phosphothreonine. Glycyl lysine isopeptide (Lys-Gly) (interchain with G-Cter in SUMO2); alternate cross-links involve residues K168 and K173. Residues K168 and K173 each carry the N6-acetyllysine; alternate modification. Position 176 is a phosphothreonine (T176). K186 participates in a covalent cross-link: Glycyl lysine isopeptide (Lys-Gly) (interchain with G-Cter in SUMO2). Phosphoserine occurs at positions 189 and 201. The interval 193–353 is disordered; the sequence is MQEVQSSRSG…SGGYGGRSRY (161 aa). Residues 202–223 are compositionally biased toward gly residues; that stretch reads GRGGNFGFGDSRGGGGNFGPGP. Residue R203 is modified to Asymmetric dimethylarginine; alternate. Position 203 is a dimethylated arginine; alternate (R203). At R203 the chain carries Omega-N-methylarginine; alternate. Phosphoserine is present on S212. R213 is modified (asymmetric dimethylarginine; alternate). R213 carries the dimethylated arginine; alternate modification. R213 carries the omega-N-methylarginine; alternate modification. S225 bears the Phosphoserine mark. An Omega-N-methylarginine modification is found at R228. A phosphoserine mark is found at S231 and S236. Position 238 is an omega-N-methylarginine (R238). At S259 the chain carries Phosphoserine. Residue R266 is modified to Asymmetric dimethylarginine; alternate. R266 carries the omega-N-methylarginine; alternate modification. Positions 308–347 are nuclear targeting sequence; that stretch reads QQPSNYGPMKSGNFGGSRNMGGPYGGGNYGPGGSGGSGGY. Residues 320-353 are compositionally biased toward gly residues; the sequence is NFGGSRNMGGPYGGGNYGPGGSGGSGGYGGRSRY. S324 carries the post-translational modification Phosphoserine. R325 carries the omega-N-methylarginine modification. Y331 carries the post-translational modification Phosphotyrosine. A phosphoserine mark is found at S341 and S344. Position 347 is a phosphotyrosine (Y347). R350 bears the Omega-N-methylarginine mark.

In terms of assembly, identified in the spliceosome C complex. Identified in a IGF2BP1-dependent mRNP granule complex containing untranslated mRNAs. Interacts with IGF2BP1. Interacts with C9orf72. Interacts with DGCR8. Interacts with TARDBP. Interacts with CKAP5. Interacts with PPIA/CYPA. Interacts (via C-terminus) with FAM76B; the interaction results in retention of HNRNPA2B1 in the nucleus and inhibition of the NF-kappa-B-mediated inflammatory pathway. Interacts with NF-kappa-B inhibitors NFKBIA and NFKBIE; the interaction may be mediated by the RRM2 domain of HNRNPA2B1, and HNRNPA2B1 may interact simultaneously with FAM76B and either NFKBIA or NFKBIE to form a complex. In terms of processing, sumoylated in exosomes, promoting miRNAs-binding. Post-translationally, asymmetric dimethylation at Arg-266 constitutes the major methylation site. According to a report, methylation affects subcellular location and promotes nuclear localization. According to another report, methylation at Arg-266 does not influence nucleocytoplasmic shuttling.

It is found in the nucleus. Its subcellular location is the nucleoplasm. The protein resides in the cytoplasmic granule. It localises to the secreted. The protein localises to the extracellular exosome. Functionally, heterogeneous nuclear ribonucleoprotein (hnRNP) that associates with nascent pre-mRNAs, packaging them into hnRNP particles. The hnRNP particle arrangement on nascent hnRNA is non-random and sequence-dependent and serves to condense and stabilize the transcripts and minimize tangling and knotting. Packaging plays a role in various processes such as transcription, pre-mRNA processing, RNA nuclear export, subcellular location, mRNA translation and stability of mature mRNAs. Forms hnRNP particles with at least 20 other different hnRNP and heterogeneous nuclear RNA in the nucleus. Involved in transport of specific mRNAs to the cytoplasm in oligodendrocytes and neurons: acts by specifically recognizing and binding the A2RE (21 nucleotide hnRNP A2 response element) or the A2RE11 (derivative 11 nucleotide oligonucleotide) sequence motifs present on some mRNAs, and promotes their transport to the cytoplasm. Specifically binds single-stranded telomeric DNA sequences, protecting telomeric DNA repeat against endonuclease digestion. Also binds other RNA molecules, such as primary miRNA (pri-miRNAs): acts as a nuclear 'reader' of the N6-methyladenosine (m6A) mark by specifically recognizing and binding a subset of nuclear m6A-containing pri-miRNAs. Binding to m6A-containing pri-miRNAs promotes pri-miRNA processing by enhancing binding of DGCR8 to pri-miRNA transcripts. Involved in miRNA sorting into exosomes following sumoylation, possibly by binding (m6A)-containing pre-miRNAs. Acts as a regulator of efficiency of mRNA splicing, possibly by binding to m6A-containing pre-mRNAs. Plays a role in the splicing of pyruvate kinase PKM by binding repressively to sequences flanking PKM exon 9, inhibiting exon 9 inclusion and resulting in exon 10 inclusion and production of the PKM M2 isoform. This chain is Heterogeneous nuclear ribonucleoproteins A2/B1 (HNRNPA2B1), found in Pongo abelii (Sumatran orangutan).